An 896-amino-acid polypeptide reads, in one-letter code: Echinoderm microtubule-associated protein-like 3 (896 aa).

Met-1 carries the post-translational modification N-acetylmethionine. Positions 16–43 (LQSLSQRLRVQEQEMELVKAALAEALRL) form a coiled coil. Residues 50-209 (PSSLQGSGTP…GGPGSRRSNY (160 aa)) form a disordered region. Residues 77–88 (TPSLVSRGTQTE) are compositionally biased toward polar residues. The span at 134 to 145 (PGPPGILRPLQP) shows a compositional bias: pro residues. Residues 154 to 163 (RNSSSSSSPS) show a composition bias toward low complexity. Residues 174 to 189 (AISSANLLVRSGSTES) show a composition bias toward polar residues. Phosphoserine is present on residues Ser-176, Ser-198, and Ser-204. 13 WD repeats span residues 234 to 286 (RSLE…LYRP), 295 to 344 (GGGQ…IWDS), 350 to 392 (LQEI…VWDC), 398 to 434 (LAEI…FWNW), 448 to 487 (RKQG…TWGR), 504 to 543 (YGIV…QWGP), 549 to 584 (QEAE…LRGD), 589 to 626 (FSPV…LWDG), 629 to 667 (HALA…VLDT), 674 to 709 (SDVI…IYSV), 716 to 755 (SSRF…YWDV), 765 to 823 (RYES…LFQY), and 830 to 869 (APSR…QWRV). Residues 876–896 (GPAPATPSRTPSLSPASSLDV) form a disordered region. The segment covering 877–896 (PAPATPSRTPSLSPASSLDV) has biased composition (low complexity). Residue Thr-881 is modified to Phosphothreonine; by CDK1. Phosphoserine is present on Ser-883.

Belongs to the WD repeat EMAP family. In terms of assembly, homotrimer; self-association is mediated by the N-terminal coiled coil. Interacts with EML2 but not with EML1. Interacts (phosphorylated at Thr-881) with TUBG1, HAUS1, HAUS2, HAUS3, HAUS4, HAUS5, HAUS6, HAUS7 and HAUS8. Phosphorylation at Thr-881 during mitosis is required for interaction with TUBG1, HAUS1, HAUS2, HAUS3, HAUS4, HAUS5, HAUS6, HAUS7 and HAUS8 and their recruitment to spindle microtubules.

It localises to the cytoplasm. The protein localises to the cytoskeleton. Its subcellular location is the nucleus. It is found in the midbody. The protein resides in the spindle. Regulates mitotic spindle assembly, microtubule (MT)-kinetochore attachment and chromosome separation via recruitment of HAUS augmin-like complex and TUBG1 to the existing MTs and promoting MT-based MT nucleation. Required for proper alignnment of chromosomes during metaphase. This chain is Echinoderm microtubule-associated protein-like 3 (EML3), found in Homo sapiens (Human).